We begin with the raw amino-acid sequence, 469 residues long: Glutamate--tRNA ligase 2 (469 aa).

The 'HIGH' region signature appears at 11–21 (PSPTGHLHLGG). The 'KMSKS' region motif lies at 238 to 242 (KLSKR). An ATP-binding site is contributed by Lys-241.

It belongs to the class-I aminoacyl-tRNA synthetase family. Glutamate--tRNA ligase type 1 subfamily. In terms of assembly, monomer.

The protein localises to the cytoplasm. The catalysed reaction is tRNA(Glu) + L-glutamate + ATP = L-glutamyl-tRNA(Glu) + AMP + diphosphate. Its function is as follows. Catalyzes the attachment of glutamate to tRNA(Glu) in a two-step reaction: glutamate is first activated by ATP to form Glu-AMP and then transferred to the acceptor end of tRNA(Glu). This is Glutamate--tRNA ligase 2 from Ehrlichia chaffeensis (strain ATCC CRL-10679 / Arkansas).